A 395-amino-acid chain; its full sequence is Neuromedin-U receptor 2 (395 aa).

Residues 1–41 (MGKLENASWIHDPLMKYLNSTEEYLAHLCGPKRSDLSLPVS) lie on the Extracellular side of the membrane. N6 and N19 each carry an N-linked (GlcNAc...) asparagine glycan. The helical transmembrane segment at 42–62 (VAYALIFLVGVMGNLLVCMVI) threads the bilayer. Residues 63-74 (VRHQTLKTPTNY) are Cytoplasmic-facing. The chain crosses the membrane as a helical span at residues 75 to 95 (YLFSLAVSDLLVLLLGMPLEI). At 96-115 (YEMWHNYPFLFGPVGCYFKT) the chain is on the extracellular side. C111 and C196 are oxidised to a cystine. Residues 116 to 138 (ALFETVCFASILSVTTVSVERYV) form a helical membrane-spanning segment. At 139-157 (AIVHPFRAKLESTRRRALR) the chain is on the cytoplasmic side. A helical transmembrane segment spans residues 158–178 (ILSLVWSFSVVFSLPNTSIHG). The Extracellular portion of the chain corresponds to 179–212 (IKFQHFPNGSSVPGSATCTVTKPMWVYNLIIQAT). N186 is a glycosylation site (N-linked (GlcNAc...) asparagine). A helical transmembrane segment spans residues 213–233 (SFLFYILPMTLISVLYYLMGL). Over 234-257 (RLKRDESLEANKVAVNIHRPSRKS) the chain is Cytoplasmic. A helical membrane pass occupies residues 258–278 (VTKMLFVLVLVFAICWTPFHV). The Extracellular segment spans residues 279–293 (DRLFFSFVEEWTESL). The helical transmembrane segment at 294 to 314 (AAVFNLIHVVSGVFFYLSSAV) threads the bilayer. The Cytoplasmic portion of the chain corresponds to 315–395 (NPIIYNLLSR…TTAPCAGEVP (81 aa)). The disordered stretch occupies residues 374–395 (FPGQSSIHNTNLTTAPCAGEVP). Residues 375 to 387 (PGQSSIHNTNLTT) are compositionally biased toward polar residues.

It belongs to the G-protein coupled receptor 1 family. The highest level is detected in the uterus. In the central nervous system, high expression levels were found in the hypothalamus and moderate levels in both the medulla oblongata and spinal cord. Expressed in the hypothalamic paraventricular nucleus (PVN) and suprachiasmatic nuclei (SCN) of the hypothalamus. Expression is low in the gastrointestinal tract. In other peripheral tissues, moderate expression was observed in the lung and ovary.

The protein resides in the cell membrane. In terms of biological role, receptor for the neuromedin-U and neuromedin-S neuropeptides. In Rattus norvegicus (Rat), this protein is Neuromedin-U receptor 2 (Nmur2).